Here is an 823-residue protein sequence, read N- to C-terminus: High affinity cAMP-specific and IBMX-insensitive 3',5'-cyclic phosphodiesterase 8A (823 aa).

Positions 1–55 are disordered; sequence MGCAPSIHTSENRTFSHSDGEDEDVDVDVPGPAPRSIQRWSTAPGLVEPQPRDNG. Over residues 10–19 the composition is skewed to basic and acidic residues; it reads SENRTFSHSD. Residues 209 to 280 form the PAS domain; it reads ACNSVFTALE…AINSCVTVDK (72 aa). The PAC domain maps to 283 to 325; sequence QGVYHTQKKNGDNIQQNVKIIPVIGQGGKIRHYVSIIRVCNGN. Positions 338-373 are disordered; sequence DSQTDNQAGKHKDRRKHSMDAKAVSSRTSDVSSQRR. The residue at position 355 (S355) is a Phosphoserine; by PKA. S382 and S452 each carry phosphoserine. Y456 bears the Phosphotyrosine mark. The 340-residue stretch at 475–814 folds into the PDEase domain; sequence SLHDVPPRIA…RYWKGLDEKK (340 aa). H551 functions as the Proton donor in the catalytic mechanism. Positions 555, 591, 592, and 720 each coordinate a divalent metal cation.

It belongs to the cyclic nucleotide phosphodiesterase family. PDE8 subfamily. In terms of assembly, interacts with RAF1. The interaction promotes RAF1 activity. A divalent metal cation serves as cofactor. Phosphorylated at Ser-355 by PKA under elevated cAMP conditions, this enhances catalytic activity. As to expression, expressed in multiple tissues, with highest levels in testis, followed by liver, heart, skeletal muscle, and kidney. In the testis, expressed specifically in the seminiferous tubules, in postmitotic pachytene spermatocytes. Low expression, if any, in lung, smooth muscle, pancreas, thyroid, thymus, submaxillary gland, spleen, prostate, epididymus, uterus.

It carries out the reaction 3',5'-cyclic AMP + H2O = AMP + H(+). It functions in the pathway purine metabolism; 3',5'-cyclic AMP degradation; AMP from 3',5'-cyclic AMP: step 1/1. Inhibited by dipyridimole. Insensitive to selective PDE inhibitor rolipram and to the non-selective inhibitor, IBMX. In terms of biological role, hydrolyzes the second messenger cAMP, which is a key regulator of many important physiological processes. May be involved in maintaining basal levels of the cyclic nucleotide and/or in the cAMP regulation of germ cell development. Binding to RAF1 reduces RAF1 'Ser-259' inhibitory-phosphorylation and stimulates RAF1-dependent EGF-activated ERK-signaling. Protects against cell death induced by hydrogen peroxide and staurosporine. This Mus musculus (Mouse) protein is High affinity cAMP-specific and IBMX-insensitive 3',5'-cyclic phosphodiesterase 8A (Pde8a).